Reading from the N-terminus, the 117-residue chain is Ig heavy chain V region 186-1 (117 aa).

A signal peptide spans 1–19; sequence MGWSCIMLFLAATATGVHS. Residues 20 to 49 form a framework-1 region; sequence QVQLQQPGAELVKPGASVKLSCKASGYTFT. Cys41 and Cys115 form a disulfide bridge. The interval 50–54 is complementarity-determining-1; it reads SYWMH. The segment at 55–68 is framework-2; it reads WVKQRPGRGLEWIG. The complementarity-determining-2 stretch occupies residues 69–85; it reads RIDPNSGGTKYNEKFKS. Residues 86 to 117 form a framework-3 region; that stretch reads KATLTVDTSSSTAYMQLHSLTSEDSAVYYCAR.

In Mus musculus (Mouse), this protein is Ig heavy chain V region 186-1.